A 129-amino-acid chain; its full sequence is Small ribosomal subunit protein uS12 (129 aa).

At Asp-89 the chain carries 3-methylthioaspartic acid. The tract at residues 110–129 (RKQGRSRYGAPRKQVVATKK) is disordered.

It belongs to the universal ribosomal protein uS12 family. In terms of assembly, part of the 30S ribosomal subunit. Contacts proteins S8 and S17. May interact with IF1 in the 30S initiation complex.

Its function is as follows. With S4 and S5 plays an important role in translational accuracy. Interacts with and stabilizes bases of the 16S rRNA that are involved in tRNA selection in the A site and with the mRNA backbone. Located at the interface of the 30S and 50S subunits, it traverses the body of the 30S subunit contacting proteins on the other side and probably holding the rRNA structure together. The combined cluster of proteins S8, S12 and S17 appears to hold together the shoulder and platform of the 30S subunit. The sequence is that of Small ribosomal subunit protein uS12 from Rickettsia bellii (strain RML369-C).